The chain runs to 212 residues: MIAKLKGLIDSLGDDWAVVDCNGVGYLVACSSKTLARLETGTAAALFVETQVREDAISLFGFLETGERDWFRLLTTVQGVGAKVALAILSVASPDQLLQIIAAQDKAGLTRANGVGPKLAVRILTELKDKAGKIALGGFSPGGIKDALSASAPLPAASGRMEDAVSALVNLGYKRLEAFQAVGETARELGDEADSSALIRAALKHLGKGLLG.

The tract at residues 1 to 63 is domain I; the sequence is MIAKLKGLID…EDAISLFGFL (63 aa). Residues 64–142 are domain II; that stretch reads ETGERDWFRL…KIALGGFSPG (79 aa). Residues 143 to 155 are flexible linker; that stretch reads GIKDALSASAPLP. Residues 156–212 form a domain III region; it reads AASGRMEDAVSALVNLGYKRLEAFQAVGETARELGDEADSSALIRAALKHLGKGLLG.

It belongs to the RuvA family. Homotetramer. Forms an RuvA(8)-RuvB(12)-Holliday junction (HJ) complex. HJ DNA is sandwiched between 2 RuvA tetramers; dsDNA enters through RuvA and exits via RuvB. An RuvB hexamer assembles on each DNA strand where it exits the tetramer. Each RuvB hexamer is contacted by two RuvA subunits (via domain III) on 2 adjacent RuvB subunits; this complex drives branch migration. In the full resolvosome a probable DNA-RuvA(4)-RuvB(12)-RuvC(2) complex forms which resolves the HJ.

It localises to the cytoplasm. Its function is as follows. The RuvA-RuvB-RuvC complex processes Holliday junction (HJ) DNA during genetic recombination and DNA repair, while the RuvA-RuvB complex plays an important role in the rescue of blocked DNA replication forks via replication fork reversal (RFR). RuvA specifically binds to HJ cruciform DNA, conferring on it an open structure. The RuvB hexamer acts as an ATP-dependent pump, pulling dsDNA into and through the RuvAB complex. HJ branch migration allows RuvC to scan DNA until it finds its consensus sequence, where it cleaves and resolves the cruciform DNA. The sequence is that of Holliday junction branch migration complex subunit RuvA from Paramagnetospirillum magneticum (strain ATCC 700264 / AMB-1) (Magnetospirillum magneticum).